A 488-amino-acid chain; its full sequence is Coagulation factor X (488 aa).

The signal sequence occupies residues 1 to 31; sequence MGRPLHLVLLSASLAGLLLLGESLFIRREQA. Positions 32 to 40 are excised as a propeptide; that stretch reads NNILARVTR. The region spanning 41–85 is the Gla domain; it reads ANSFLEEMKKGHLERECMEETCSYEEAREVFEDSDKTNEFWNKYK. 11 positions are modified to 4-carboxyglutamate: E46, E47, E54, E56, E59, E60, E65, E66, E69, E72, and E79. A disulfide bond links C57 and C62. Residues 86–122 enclose the EGF-like 1; calcium-binding domain; sequence DGDQCETSPCQNQGKCKDGLGEYTCTCLEGFEGKNCE. 11 disulfides stabilise this stretch: C90/C101, C95/C110, C112/C121, C129/C140, C136/C149, C151/C164, C172/C342, C241/C246, C261/C277, C390/C404, and C415/C443. A (3R)-3-hydroxyaspartate modification is found at D103. The region spanning 125–165 is the EGF-like 2 domain; sequence TRKLCSLDNGDCDQFCHEEQNSVVCSCARGYTLADNGKACI. The tract at residues 183–203 is O-glycosylated at one site; that stretch reads SVAQATSSSGEAPDSITWKPY. A propeptide spans 183-234 (activation peptide); it reads SVAQATSSSGEAPDSITWKPYDAADLDPTENPFDLLDFNQTQPERGDNNLTR. T199 and T211 each carry an O-linked (GalNAc...) threonine glycan. N221 and N231 each carry an N-linked (GlcNAc...) asparagine glycan. In terms of domain architecture, Peptidase S1 spans 235–467; that stretch reads IVGGQECKDG…FLKWIDRSMK (233 aa). Catalysis depends on charge relay system residues H276 and D322. S419 (charge relay system) is an active-site residue. Residues 476 to 485 are O-glycosylated at one site; it reads SHAPEVITSS.

The protein belongs to the peptidase S1 family. In terms of assembly, the two chains are formed from a single-chain precursor by the excision of two Arg residues and are held together by 1 or more disulfide bonds. Forms a heterodimer with SERPINA5. Interacts (inactive and activated) with ixolaris, an anticoagulant protein from Ixodes scapularis saliva. Interacts (activated) with iripin-8, a serine protease inhibitor from Ixodes ricinus saliva. Interacts (activated) with FXa-directed anticoagulant from Aedes albopictus saliva. Interacts (activated) with guianensin, an anticoagulant protein from Simulium guianense saliva. Interacts (activated) with simukunin, an anticoagulant protein from Simulium vittatum saliva. Post-translationally, the vitamin K-dependent, enzymatic carboxylation of some glutamate residues allows the modified protein to bind calcium. In terms of processing, N- and O-glycosylated. O-glycosylated with core 1 or possibly core 8 glycans. Proteolytically cleaved and activated by cathepsin CTSG. The activation peptide is cleaved by factor IXa (in the intrinsic pathway), or by factor VIIa (in the extrinsic pathway). Post-translationally, the iron and 2-oxoglutarate dependent 3-hydroxylation of aspartate and asparagine is (R) stereospecific within EGF domains. Plasma; synthesized in the liver.

It localises to the secreted. It carries out the reaction Selective cleavage of Arg-|-Thr and then Arg-|-Ile bonds in prothrombin to form thrombin.. Its activity is regulated as follows. Inhibited by SERPINA5 and SERPINA10. Factor Xa is a vitamin K-dependent glycoprotein that converts prothrombin to thrombin in the presence of factor Va, calcium and phospholipid during blood clotting. Factor Xa activates pro-inflammatory signaling pathways in a protease-activated receptor (PAR)-dependent manner. Up-regulates expression of protease-activated receptors (PARs) F2R, F2RL1 and F2RL2 in dermal microvascular endothelial cells. Triggers the production of pro-inflammatory cytokines, such as MCP-1/CCL2 and IL6, in cardiac fibroblasts and umbilical vein endothelial cells in PAR-1/F2R-dependent manner. Triggers the production of pro-inflammatory cytokines, such as MCP-1/CCL2, IL6, TNF-alpha/TNF, IL-1beta/IL1B, IL8/CXCL8 and IL18, in endothelial cells and atrial tissues. Induces expression of adhesion molecules, such as ICAM1, VCAM1 and SELE, in endothelial cells and atrial tissues. Increases expression of phosphorylated ERK1/2 in dermal microvascular endothelial cells and atrial tissues. Triggers activation of the transcription factor NF-kappa-B in dermal microvascular endothelial cells and atrial tissues. Activates pro-inflammatory and pro-fibrotic responses in dermal fibroblasts and enhances wound healing probably via PAR-2/F2RL1-dependent mechanism. Activates barrier protective signaling responses in endothelial cells in PAR-2/F2RL1-dependent manner; the activity depends on the cleavage of PAR-2/F2RL1 by factor Xa. Up-regulates expression of plasminogen activator inhibitor 1 (SERPINE1) in atrial tissues. The polypeptide is Coagulation factor X (F10) (Homo sapiens (Human)).